A 297-amino-acid polypeptide reads, in one-letter code: MAQAKLIDGKAFAADLRAKIAEEVAALKAEHGVTPGLAVVLVGEDPASQVYVRNKGEQTTAAGMYSETHRLPETTTQDELLAVVAKLNADPKIHGVLVQFPVPPHISQMDVVAALSPDKDVDGLTVTNAGRLASGLPALAPCTPTGCMMLIRDAIGDLKGKTAVVIGRSNLMGKPMAQMLLAADCTVTIAHSRSQDLPSIVRQADIVVAAVGRAEMVKADWVKPGAVVIDVGITRFPARDPEAAAAGKTRLVGDVAFDEVREVAGAITPVPGGVGPMTIACLLANTLTAAKRLSGIA.

NADP(+) contacts are provided by residues 167-169 (GRS), Ser-192, and Ile-233.

Belongs to the tetrahydrofolate dehydrogenase/cyclohydrolase family. Homodimer.

The catalysed reaction is (6R)-5,10-methylene-5,6,7,8-tetrahydrofolate + NADP(+) = (6R)-5,10-methenyltetrahydrofolate + NADPH. It carries out the reaction (6R)-5,10-methenyltetrahydrofolate + H2O = (6R)-10-formyltetrahydrofolate + H(+). It participates in one-carbon metabolism; tetrahydrofolate interconversion. In terms of biological role, catalyzes the oxidation of 5,10-methylenetetrahydrofolate to 5,10-methenyltetrahydrofolate and then the hydrolysis of 5,10-methenyltetrahydrofolate to 10-formyltetrahydrofolate. The protein is Bifunctional protein FolD of Caulobacter vibrioides (strain ATCC 19089 / CIP 103742 / CB 15) (Caulobacter crescentus).